Reading from the N-terminus, the 174-residue chain is uncharacterized protein (174 aa).

This is an uncharacterized protein from Acidianus convivator (ABV).